We begin with the raw amino-acid sequence, 281 residues long: uncharacterized protein (281 aa).

Its subcellular location is the plastid. It localises to the chloroplast. This is an uncharacterized protein from Euglena gracilis.